The sequence spans 1232 residues: Pyruvate:ferredoxin oxidoreductase (1232 aa).

Thr-31 is a binding site for pyruvate. Residue Glu-64 coordinates thiamine diphosphate. Arg-114 serves as a coordination point for pyruvate. CoA is bound by residues 427–431 (ADGTV), Lys-459, Asn-560, and Asn-602. 2 consecutive 4Fe-4S ferredoxin-type domains span residues 680–709 (NVPQWVPENCIQCNQCAFVCPHSAILPVLA) and 736–767 (FRIQINTLDCMGCGNCADICPPKEKALVMQPL). 10 residues coordinate [4Fe-4S] cluster: Cys-689, Cys-692, Cys-695, Cys-699, Cys-745, Cys-748, Cys-751, Cys-755, Cys-812, and Cys-815. Thiamine diphosphate contacts are provided by residues Glu-817, Cys-840, and 962-965 (GDGW). Cys-840 contributes to the [4Fe-4S] cluster binding site. Asp-963 provides a ligand contact to Mg(2+). The Ca(2+) site is built by Asp-983 and Asn-985. The Mg(2+) site is built by Thr-991 and Val-993. Thiamine diphosphate is bound at residue 991–996 (TEVYSN). 4 residues coordinate Ca(2+): Ala-1056, Phe-1059, Gly-1061, and Ser-1063. Cys-1071 serves as a coordination point for [4Fe-4S] cluster. The cysteines at positions 1195 and 1212 are disulfide-linked. The tract at residues 1197–1232 (RDDTPMMARPDSGEACDQNRAGTSEQQGDLSKRTKK) is disordered. Residues 1216–1225 (RAGTSEQQGD) show a composition bias toward polar residues.

This sequence belongs to the pyruvate:ferredoxin/flavodoxin oxidoreductase family. Homodimer. It depends on [4Fe-4S] cluster as a cofactor. Requires thiamine diphosphate as cofactor. Mg(2+) serves as cofactor.

The protein resides in the cytoplasm. It catalyses the reaction 2 oxidized [2Fe-2S]-[ferredoxin] + pyruvate + CoA = 2 reduced [2Fe-2S]-[ferredoxin] + acetyl-CoA + CO2 + H(+). Catalyzes the ferredoxin-dependent oxidative decarboxylation of pyruvate. Required for the transfer of electrons from pyruvate to ferredoxin. Ferredoxin I and ferredoxin II, which are single 4Fe-4S cluster ferredoxins are the most effective electron carriers of POR. The protein is Pyruvate:ferredoxin oxidoreductase of Desulfocurvibacter africanus (Desulfovibrio africanus).